We begin with the raw amino-acid sequence, 732 residues long: Translation initiation factor IF-2 (732 aa).

Positions 40-147 are disordered; that stretch reads PEVVEKLDHT…QQEQPMKKEK (108 aa). The segment covering 42 to 67 has biased composition (basic and acidic residues); that stretch reads VVEKLDHTYNKKNERPQASAPKEKQK. Residues 90–103 show a composition bias toward basic residues; that stretch reads KVPKKKSANKKKEG. Positions 104–117 are enriched in basic and acidic residues; that stretch reads KKHDLQLQQQEKKI. Basic residues predominate over residues 118–129; the sequence is FHQQKKKIKGKA. Positions 233–402 constitute a tr-type G domain; the sequence is ERPPVVTIMG…LLVSEMEELK (170 aa). A G1 region spans residues 242–249; sequence GHVDHGKT. A GTP-binding site is contributed by 242 to 249; it reads GHVDHGKT. The segment at 267–271 is G2; the sequence is GITQH. The G3 stretch occupies residues 288–291; sequence DTPG. GTP is bound by residues 288–292 and 342–345; these read DTPGH and NKMD. A G4 region spans residues 342–345; the sequence is NKMD. The interval 378-380 is G5; it reads SAK.

Belongs to the TRAFAC class translation factor GTPase superfamily. Classic translation factor GTPase family. IF-2 subfamily.

The protein localises to the cytoplasm. Functionally, one of the essential components for the initiation of protein synthesis. Protects formylmethionyl-tRNA from spontaneous hydrolysis and promotes its binding to the 30S ribosomal subunits. Also involved in the hydrolysis of GTP during the formation of the 70S ribosomal complex. This is Translation initiation factor IF-2 from Geobacillus sp. (strain WCH70).